A 345-amino-acid chain; its full sequence is Endochitinase 4 (345 aa).

The signal sequence occupies residues 1 to 27 (MAPLLNTGLVILPLIVSTLLGPMPAFA). N29 and N89 each carry an N-linked (GlcNAc...) asparagine glycan. The GH18 domain occupies 41–345 (KVLQGYWENW…TFGDNVKGRL (305 aa)). E163 functions as the Proton donor in the catalytic mechanism. N316 carries an N-linked (GlcNAc...) asparagine glycan.

The protein belongs to the glycosyl hydrolase 18 family. Chitinase class V subfamily.

Its subcellular location is the secreted. The enzyme catalyses Random endo-hydrolysis of N-acetyl-beta-D-glucosaminide (1-&gt;4)-beta-linkages in chitin and chitodextrins.. Functionally, secreted chitinase involved in the degradation of chitin, a component of the cell walls of fungi and exoskeletal elements of some animals (including worms and arthropods). Participates in the infection process and directly acts in the penetration process of the host cuticle. The protein is Endochitinase 4 (chi4) of Metarhizium robertsii (strain ARSEF 23 / ATCC MYA-3075) (Metarhizium anisopliae (strain ARSEF 23)).